The chain runs to 604 residues: MELRDSIRSFPTAPGVYLMRDATGTILYVGKARNLRQRVSNYFGATDGRPQVRFLMARVTSIEFTITDTEKEALLLENTLIKQHQPRYNLNLKDDKTFFSLRIDLTERFPRFTVVRKVSRDGARYFGPYASASAAREVLRQLQRMFPLRHYPLKTCLNRSRPCLYHQIGQCSAPCHNLITAEEYNLLVEGAVLFLEGKNKDLVSGFRQRMKEAAEGLHYEEAARWRDLLKAIDTTLEHQKMVSQGGDSDILGLAGNEDSLAIAVLFVRGGSLSGSTVLHGSGGLDTSDTLATFIQYYYGNERFIPDELLLPLSLDAGQSLEEWLSELKGKKVRLQQPKRGDKLNLVNLATRNAQAALAEKSATRQGIERTLAELQQKLALPRLPRRIECYDISTLQGRHSVGSGVAFLDGLPDKERYRRYRIRESQGQDDFGMLQEVFARRFSPERIEQWGLPDLVVVDGGIGQLNSTLSVLAELGLSERPAVVSLAKSRVKGDGKDIHVERTEERVFLPGRRNPVRLRQDSAPLKLLAAIRDEAHRFAIGYHRRLRDRETLRSALREIPGVGPKLERLLLTRFGSLEGIQNATVEELATVAGVSQELARLIKA.

The GIY-YIG domain maps to 12–90 (TAPGVYLMRD…IKQHQPRYNL (79 aa)). One can recognise a UVR domain in the interval 200 to 235 (KDLVSGFRQRMKEAAEGLHYEEAARWRDLLKAIDTT).

This sequence belongs to the UvrC family. In terms of assembly, interacts with UvrB in an incision complex.

It localises to the cytoplasm. Its function is as follows. The UvrABC repair system catalyzes the recognition and processing of DNA lesions. UvrC both incises the 5' and 3' sides of the lesion. The N-terminal half is responsible for the 3' incision and the C-terminal half is responsible for the 5' incision. This is UvrABC system protein C from Trichlorobacter lovleyi (strain ATCC BAA-1151 / DSM 17278 / SZ) (Geobacter lovleyi).